We begin with the raw amino-acid sequence, 1179 residues long: ATP-dependent helicase/deoxyribonuclease subunit B (1179 aa).

Belongs to the helicase family. AddB/RexB type 2 subfamily. In terms of assembly, heterodimer of AddA and RexB. Requires Mg(2+) as cofactor.

Functionally, the heterodimer acts as both an ATP-dependent DNA helicase and an ATP-dependent, dual-direction single-stranded exonuclease. Recognizes the chi site generating a DNA molecule suitable for the initiation of homologous recombination. This subunit has 5' -&gt; 3' nuclease activity but not helicase activity. In Lactobacillus delbrueckii subsp. bulgaricus (strain ATCC BAA-365 / Lb-18), this protein is ATP-dependent helicase/deoxyribonuclease subunit B.